The chain runs to 787 residues: Aminodeoxychorismate synthase (787 aa).

In terms of domain architecture, Glutamine amidotransferase type-1 spans 16–233; it reads HVLFIDSYDS…LKLSFINNVK (218 aa). Residues Cys112, His207, and Glu209 contribute to the active site. The interval 304–787 is PABB component; sequence MSSSVISENT…KLESNLQIFM (484 aa).

In the C-terminal section; belongs to the anthranilate synthase component I family.

It is found in the cytoplasm. It catalyses the reaction chorismate + L-glutamine = 4-amino-4-deoxychorismate + L-glutamate. It participates in cofactor biosynthesis; tetrahydrofolate biosynthesis; 4-aminobenzoate from chorismate: step 1/2. Catalyzes the biosynthesis of 4-amino-4-deoxychorismate (ADC) from chorismate and glutamine. Required for the synthesis of 4-aminobenzoate (PABA), an important component in tetrahydrofolate biosynthesis. The polypeptide is Aminodeoxychorismate synthase (ABZ1) (Saccharomyces cerevisiae (strain ATCC 204508 / S288c) (Baker's yeast)).